The sequence spans 133 residues: Major seminal plasma glycoprotein PSP-I (133 aa).

A signal peptide spans 1-24 (MKLGSAIPWALLFSTATLISTGWG). C30 and C51 form a disulfide bridge. Positions 30-130 (CGGRLTDDYG…SPYEIIFLRD (101 aa)) constitute a CUB domain. Residue N71 is glycosylated (N-linked (GlcNAc...) (complex) asparagine). Cysteines 74 and 95 form a disulfide.

As to quaternary structure, monomer or heterodimer with PSP-II (depending on the type of glycosylation of PSP-I). In terms of tissue distribution, seminal plasma or sperm.

The protein localises to the secreted. Its function is as follows. Not yet identified, major porcine seminal plasma protein. Can bind soybean trypsin inhibitor after deglycosylation. The chain is Major seminal plasma glycoprotein PSP-I from Sus scrofa (Pig).